Reading from the N-terminus, the 145-residue chain is uncharacterized protein (145 aa).

This is an uncharacterized protein from Methanothrix soehngenii (Methanosaeta concilii).